The following is a 317-amino-acid chain: Putative carboxypeptidase RP402 (317 aa).

Ser125 acts as the Nucleophile in catalysis. Catalysis depends on charge relay system residues Glu225 and His288.

Belongs to the peptidase S66 family.

This Rickettsia prowazekii (strain Madrid E) protein is Putative carboxypeptidase RP402.